Reading from the N-terminus, the 202-residue chain is Remorin 1.4 (202 aa).

The segment covering 1 to 10 (MAEEEPKKVT) has biased composition (basic and acidic residues). Residues 1–79 (MAEEEPKKVT…VEEEKKEGSV (79 aa)) form a disordered region. A compositionally biased stretch (low complexity) spans 25-39 (EKPAAAADVAPQEKP). Positions 40–50 (VAPPPVLPSPA) are enriched in pro residues. Residues 68 to 79 (KEVEEEKKEGSV) are compositionally biased toward basic and acidic residues. The stretch at 123-169 (ENNKKAAVEAELKKMEEQLEKKKAEYVEQMKNKIAQIHKEAEEKRAM) forms a coiled coil.

Belongs to the remorin family.

In Arabidopsis thaliana (Mouse-ear cress), this protein is Remorin 1.4.